The following is a 372-amino-acid chain: Pyrimidine monooxygenase RutA (372 aa).

FMN is bound by residues isoleucine 57 to lysine 58, asparagine 123, glutamate 132, arginine 148 to tyrosine 149, and serine 198.

It belongs to the NtaA/SnaA/DszA monooxygenase family. RutA subfamily.

It catalyses the reaction uracil + FMNH2 + NADH + O2 = (Z)-3-ureidoacrylate + FMN + NAD(+) + H2O + H(+). The enzyme catalyses thymine + FMNH2 + NADH + O2 = (Z)-2-methylureidoacrylate + FMN + NAD(+) + H2O + H(+). Catalyzes the pyrimidine ring opening between N-3 and C-4 by an unusual flavin hydroperoxide-catalyzed mechanism, adding oxygen atoms in the process to yield ureidoacrylate peracid, that immediately reacts with FMN forming ureidoacrylate and FMN-N(5)-oxide. The FMN-N(5)-oxide reacts spontaneously with NADH to produce FMN. Requires the flavin reductase RutF to regenerate FMN in vivo. This is Pyrimidine monooxygenase RutA from Methylorubrum extorquens (strain PA1) (Methylobacterium extorquens).